We begin with the raw amino-acid sequence, 39 residues long: SYSMEHFRWGKPVGKKRRPVKVYPNGAEDESAEAFPLEF.

Ser1 carries the post-translational modification N-acetylserine. Valine amide is present on Val13. Phosphoserine is present on Ser31.

Belongs to the POMC family.

It localises to the secreted. Precursor protein for pituitary hormones that regulate stress and environmental adaptation. Functionally, stimulates the adrenal glands to release cortisol. In terms of biological role, anorexigenic peptide. Increases the pigmentation of skin by increasing melanin production in melanocytes. This is Pro-opiomelanocortin (POMC) from Balaenoptera borealis (Sei whale).